Here is a 253-residue protein sequence, read N- to C-terminus: Claudin domain-containing protein 1 (253 aa).

Residues 5–25 traverse the membrane as a helical segment; it reads FATAFVIACVLSLISTIYMAA. Residues asparagine 42 and asparagine 72 are each glycosylated (N-linked (GlcNAc...) asparagine). Transmembrane regions (helical) follow at residues 141–161, 175–195, and 216–236; these read FLLPFVSLGLMCFGALIGLCA, ILHLLAGLCTLGSVSCYVAGI, and FCLACVSAPLQFMASALFIWA.

Belongs to the PMP-22/EMP/MP20 family.

The protein resides in the cell junction. It is found in the tight junction. Its subcellular location is the cell membrane. In terms of biological role, plays a role in negatively regulating the permeability of cells to small molecules. The chain is Claudin domain-containing protein 1 (CLDND1) from Macaca fascicularis (Crab-eating macaque).